A 72-amino-acid chain; its full sequence is Protein kish-A (72 aa).

A signal peptide spans 1–26 (MSAIFNFQSLLTVILLLICTCAYIRS). Topologically, residues 27–53 (LAPSLLDKNKSGLLGIFWKCARIGERK) are extracellular. An N-linked (GlcNAc...) asparagine glycan is attached at asparagine 35. Residues 54–71 (SPYVAVCCVVMAFSILFM) traverse the membrane as a helical segment. Residue glutamine 72 is a topological domain, cytoplasmic.

This sequence belongs to the KISH family.

It localises to the golgi apparatus membrane. Its function is as follows. Involved in the early part of the secretory pathway. This chain is Protein kish-A (TMEM167A), found in Taeniopygia guttata (Zebra finch).